Reading from the N-terminus, the 138-residue chain is Putative nickel-responsive regulator (138 aa).

Ni(2+) contacts are provided by His78, His89, His91, and Cys97.

This sequence belongs to the transcriptional regulatory CopG/NikR family. Requires Ni(2+) as cofactor.

Transcriptional regulator. This Pyrococcus abyssi (strain GE5 / Orsay) protein is Putative nickel-responsive regulator.